Reading from the N-terminus, the 504-residue chain is Glucosaminyl-phosphatidylinositol-acyltransferase PIGW (504 aa).

The Lumenal segment spans residues M1–E21. The N-linked (GlcNAc...) asparagine glycan is linked to N15. The chain crosses the membrane as a helical span at residues I22–F42. Over S43–R56 the chain is Cytoplasmic. A helical membrane pass occupies residues F57–W75. Residues A76–L81 are Lumenal-facing. The chain crosses the membrane as a helical span at residues E82–Y98. Topologically, residues R99–C131 are cytoplasmic. Residues F132–F152 form a helical membrane-spanning segment. Over P153 to Y162 the chain is Lumenal. Residues G163 to L183 traverse the membrane as a helical segment. The Cytoplasmic segment spans residues E184–S202. The chain crosses the membrane as a helical span at residues L203–I223. Topologically, residues G224–N237 are lumenal. A helical membrane pass occupies residues F238 to L258. Over N259–K260 the chain is Cytoplasmic. The chain crosses the membrane as a helical span at residues S261–L281. Residues K282–G305 lie on the Lumenal side of the membrane. The chain crosses the membrane as a helical span at residues I306 to M326. Residues H327–K338 lie on the Cytoplasmic side of the membrane. The chain crosses the membrane as a helical span at residues V339–V359. Residues N360–N370 lie on the Lumenal side of the membrane. A helical transmembrane segment spans residues L371 to G391. Over D392–Q448 the chain is Cytoplasmic. A Phosphoserine modification is found at S416. The helical transmembrane segment at L449–L469 threads the bilayer. Residues H470 to T473 lie on the Lumenal side of the membrane. Residues L474–L494 traverse the membrane as a helical segment. Residues Y495–W504 are Cytoplasmic-facing.

Belongs to the PIGW family.

The protein localises to the endoplasmic reticulum membrane. It functions in the pathway glycolipid biosynthesis; glycosylphosphatidylinositol-anchor biosynthesis. Acyltransferase that catalyzes the acyl transfer from an acyl-CoA at the 2-OH position of the inositol ring of glucosaminyl phosphatidylinositol (GlcN-PI) to generate glucosaminyl acyl phosphatidylinositol (GlcN-(acyl)PI) and participates in the fourth step of GPI-anchor biosynthesis. Required for the transport of GPI-anchored proteins to the plasma membrane. Acetylation during GPI-anchor biosynthesis is not essential for the subsequent mannosylation and is usually removed soon after the attachment of GPIs to proteins. The polypeptide is Glucosaminyl-phosphatidylinositol-acyltransferase PIGW (Homo sapiens (Human)).